We begin with the raw amino-acid sequence, 654 residues long: Potassium voltage-gated channel subfamily A member 4 (654 aa).

Residues 1–305 (MEVAMVSAES…LLFEYPESSS (305 aa)) lie on the Cytoplasmic side of the membrane. Residues 24–145 (QARARERERL…EEGRFYYSEE (122 aa)) form a disordered region. The span at 36 to 50 (SRAAAAAAVAAATAA) shows a compositional bias: low complexity. The span at 81–99 (GSRRRRRQRTEKKKLHHRQ) shows a compositional bias: basic residues. At serine 122 the chain carries Phosphoserine. Residues 122–137 (SEEEEDEEEEEEEEEE) are compositionally biased toward acidic residues. A helical membrane pass occupies residues 306 to 327 (PARGIAIVSVLVILISIVIFCL). Residues 328–371 (ETLPEFRDDRDLIMALSAGGHSRLLNDTSAPHLENSGHTIFNDP) lie on the Extracellular side of the membrane. N-linked (GlcNAc...) asparagine glycosylation occurs at asparagine 353. Residues 372–393 (FFIVETVCIVWFSFEFVVRCFA) form a helical membrane-spanning segment. The Cytoplasmic portion of the chain corresponds to 394–404 (CPSQALFFKNI). Residues 405 to 425 (MNIIDIVSILPYFITLGTDLA) form a helical membrane-spanning segment. At 426–440 (QQQGGGNGQQQQAMS) the chain is on the extracellular side. A helical; Voltage-sensor transmembrane segment spans residues 441-461 (FAILRIIRLVRVFRIFKLSRH). The Cytoplasmic portion of the chain corresponds to 462-476 (SKGLQILGHTLRASM). The interval 463 to 476 (KGLQILGHTLRASM) is S4-S5 linker. The helical transmembrane segment at 477–498 (RELGLLIFFLFIGVILFSSAVY) threads the bilayer. Topologically, residues 499-512 (FAEADEPTTHFQSI) are extracellular. The segment at residues 513–524 (PDAFWWAVVTMT) is an intramembrane region (helical). Residues 525 to 530 (TVGYGD) carry the Selectivity filter motif. The stretch at 525–532 (TVGYGDMK) is an intramembrane region. Residues 533 to 539 (PITVGGK) lie on the Extracellular side of the membrane. Residues 540–568 (IVGSLCAIAGVLTIALPVPVIVSNFNYFY) form a helical membrane-spanning segment. The Cytoplasmic portion of the chain corresponds to 569–654 (HRETENEEQT…SNAKAVETDV (86 aa)). Phosphoserine; by PKA is present on serine 600. The segment covering 630–641 (CQGKGDESETDK) has biased composition (basic and acidic residues). Positions 630 to 654 (CQGKGDESETDKNNCSNAKAVETDV) are disordered. A PDZ-binding motif is present at residues 652 to 654 (TDV).

It belongs to the potassium channel family. A (Shaker) (TC 1.A.1.2) subfamily. Kv1.4/KCNA4 sub-subfamily. As to quaternary structure, homotetramer and heterotetramer of potassium channel proteins. Interacts with KCNAB1 and KCNAB2. Interacts with DLG1, DLG2 and DLG4 via their PDZ domains. Interacts with SIGMAR1. Detected in a complex with KCNA1. Interacts with KCNA2. Part of a complex containing KCNA1, KCNAB1 and LGI1. Interacts (via cytoplasmic N-terminal domain) with KCNRG. As to expression, expressed in the brain, lens and retina.

It is found in the cell membrane. The protein resides in the cell projection. It localises to the axon. It catalyses the reaction K(+)(in) = K(+)(out). Its function is as follows. Voltage-gated potassium channel that mediates transmembrane potassium transport in excitable membranes. Forms tetrameric potassium-selective channels through which potassium ions pass in accordance with their electrochemical gradient. The channel alternates between opened and closed conformations in response to the voltage difference across the membrane. Can form functional homotetrameric channels and heterotetrameric channels that contain variable proportions of KCNA1, KCNA2, KCNA4, KCNA5, and possibly other family members as well; channel properties depend on the type of alpha subunits that are part of the channel. Channel properties are modulated by cytoplasmic beta subunits that regulate the subcellular location of the alpha subunits and promote rapid inactivation. In vivo, membranes probably contain a mixture of heteromeric potassium channel complexes, making it difficult to assign currents observed in intact tissues to any particular potassium channel family member. Homotetrameric KCNA4 forms a potassium channel that opens in response to membrane depolarization, followed by rapid spontaneous channel closure. Likewise, a heterotetrameric channel formed by KCNA1 and KCNA4 shows rapid inactivation. The polypeptide is Potassium voltage-gated channel subfamily A member 4 (Kcna4) (Mus musculus (Mouse)).